A 397-amino-acid chain; its full sequence is Argininosuccinate synthase (397 aa).

8 to 16 (AYSGGLDTS) serves as a coordination point for ATP. L-citrulline is bound by residues tyrosine 86 and serine 91. Glycine 116 is an ATP binding site. Residues threonine 118, asparagine 122, and aspartate 123 each contribute to the L-aspartate site. An L-citrulline-binding site is contributed by asparagine 122. L-citrulline contacts are provided by arginine 126, serine 175, serine 184, glutamate 260, and tyrosine 272.

This sequence belongs to the argininosuccinate synthase family. Type 1 subfamily. Homotetramer.

The protein localises to the cytoplasm. The catalysed reaction is L-citrulline + L-aspartate + ATP = 2-(N(omega)-L-arginino)succinate + AMP + diphosphate + H(+). It participates in amino-acid biosynthesis; L-arginine biosynthesis; L-arginine from L-ornithine and carbamoyl phosphate: step 2/3. This chain is Argininosuccinate synthase, found in Clostridium botulinum (strain Langeland / NCTC 10281 / Type F).